A 378-amino-acid polypeptide reads, in one-letter code: Odorant receptor 45a (378 aa).

Residues 1–30 (MDASYFAVQRRALEIVGFDPSTPQLSLKHP) are Cytoplasmic-facing. The helical transmembrane segment at 31 to 51 (IWAGILILSLISHNWPMVVYA) threads the bilayer. The Extracellular portion of the chain corresponds to 52–129 (LQDLSDLTRL…RYVARSFRNA (78 aa)). Residues 130-150 (AYGVICASAIAPMLLGLWGYV) form a helical membrane-spanning segment. The Cytoplasmic portion of the chain corresponds to 151–173 (ETGVFTPTTPMEFNFWLDERKPH). The chain crosses the membrane as a helical span at residues 174–194 (FYWPIYVWGVLGVAAAAWLAI). Residues 195 to 197 (ATD) lie on the Extracellular side of the membrane. The chain crosses the membrane as a helical span at residues 198-218 (TLFSWLTHNVVIQFQLLELVL). At 219-249 (EEKDLNGGDSRLTGFVSRHRIALDLAKELSS) the chain is on the cytoplasmic side. The helical transmembrane segment at 250–270 (IFGEIVFVKYMLSYLQLCMLA) threads the bilayer. Residues 271 to 285 (FRFSRSGWSAQVPFR) are Extracellular-facing. The helical transmembrane segment at 286–306 (ATFLVAIIIQLSSYCYGGEYI) threads the bilayer. At 307-342 (KQQSLAIAQAVYGQINWPEMTPKKRRLWQMVIMRAQ) the chain is on the cytoplasmic side. Residues 343-363 (RPAKIFGFMFVVDLPLLLWVI) traverse the membrane as a helical segment. Residues 364–378 (RTAGSFLAMLRTFER) lie on the Extracellular side of the membrane.

Belongs to the insect chemoreceptor superfamily. Heteromeric odorant receptor channel (TC 1.A.69) family. Or1a subfamily. As to quaternary structure, interacts with Orco. Complexes exist early in the endomembrane system in olfactory sensory neurons (OSNs), coupling these complexes to the conserved ciliary trafficking pathway.

The protein resides in the cell membrane. Functionally, odorant receptor which mediates acceptance or avoidance behavior, depending on its substrates. The odorant receptor repertoire encodes a large collection of odor stimuli that vary widely in identity, intensity, and duration. May form a complex with Orco to form odorant-sensing units, providing sensitive and prolonged odorant signaling and calcium permeability. Involved in the behavioral responses to hexanol, pentyl acetate, benzyl acetate, and 2-heptanone. The chain is Odorant receptor 45a (Or45a) from Drosophila melanogaster (Fruit fly).